We begin with the raw amino-acid sequence, 942 residues long: Lambda-carrageenase (942 aa).

An N-terminal signal peptide occupies residues 1 to 25 (MKIKILSAMIASSLLIGCVIPTVKA).

In terms of assembly, monomer.

It is found in the secreted. It catalyses the reaction Endohydrolysis of (1-&gt;4)-beta-linkages in the backbone of lambda-carrageenan, resulting in the tetrasaccharide alpha-D-Galp2,6S2-(1-&gt;3)-beta-D-Galp2S-(1-&gt;4)-alpha-D-Galp2,6S2-(1-&gt;3)-D-Galp2S.. Functionally, hydrolyzes lambda-carrageenan with inversion of anomeric configuration. Does not hydrolyze iota- and kappa-carrageenans, agarose or porphyran. This Pseudoalteromonas sp protein is Lambda-carrageenase.